We begin with the raw amino-acid sequence, 293 residues long: Bifunctional protein FolD (293 aa).

Residues 164–166 (GRS), Ser-193, and Thr-234 each bind NADP(+).

Belongs to the tetrahydrofolate dehydrogenase/cyclohydrolase family. As to quaternary structure, homodimer.

It catalyses the reaction (6R)-5,10-methylene-5,6,7,8-tetrahydrofolate + NADP(+) = (6R)-5,10-methenyltetrahydrofolate + NADPH. The catalysed reaction is (6R)-5,10-methenyltetrahydrofolate + H2O = (6R)-10-formyltetrahydrofolate + H(+). It participates in one-carbon metabolism; tetrahydrofolate interconversion. Its function is as follows. Catalyzes the oxidation of 5,10-methylenetetrahydrofolate to 5,10-methenyltetrahydrofolate and then the hydrolysis of 5,10-methenyltetrahydrofolate to 10-formyltetrahydrofolate. This Phocaeicola vulgatus (strain ATCC 8482 / DSM 1447 / JCM 5826 / CCUG 4940 / NBRC 14291 / NCTC 11154) (Bacteroides vulgatus) protein is Bifunctional protein FolD.